Reading from the N-terminus, the 143-residue chain is Large ribosomal subunit protein uL15 (143 aa).

2 stretches are compositionally biased toward basic residues: residues 1–13 (MIRKSKKITKMRG) and 23–38 (KKHRGAGHRGGRGNAG). The interval 1–38 (MIRKSKKITKMRGSRTCGYGEAKKHRGAGHRGGRGNAG) is disordered.

The protein belongs to the universal ribosomal protein uL15 family. In terms of assembly, part of the 50S ribosomal subunit.

Binds to the 23S rRNA. In Methanococcus maripaludis (strain C5 / ATCC BAA-1333), this protein is Large ribosomal subunit protein uL15.